Reading from the N-terminus, the 231-residue chain is LexA repressor (231 aa).

The disordered stretch occupies residues 1-24 (MTDRKEHKMKPGRRPTEGMTPSQE). Positions 43 to 62 (VKEIAEALGMKTPSAHEQVQ) form a DNA-binding region, H-T-H motif. Catalysis depends on for autocatalytic cleavage activity residues S146 and K183.

Belongs to the peptidase S24 family. As to quaternary structure, homodimer.

It catalyses the reaction Hydrolysis of Ala-|-Gly bond in repressor LexA.. Its function is as follows. Represses a number of genes involved in the response to DNA damage (SOS response), including recA and lexA. In the presence of single-stranded DNA, RecA interacts with LexA causing an autocatalytic cleavage which disrupts the DNA-binding part of LexA, leading to derepression of the SOS regulon and eventually DNA repair. The sequence is that of LexA repressor from Magnetococcus marinus (strain ATCC BAA-1437 / JCM 17883 / MC-1).